The chain runs to 101 residues: Small ribosomal subunit protein uS14 (101 aa).

It belongs to the universal ribosomal protein uS14 family. In terms of assembly, part of the 30S ribosomal subunit. Contacts proteins S3 and S10.

Binds 16S rRNA, required for the assembly of 30S particles and may also be responsible for determining the conformation of the 16S rRNA at the A site. This Shewanella woodyi (strain ATCC 51908 / MS32) protein is Small ribosomal subunit protein uS14.